Reading from the N-terminus, the 2694-residue chain is Neurobeachin-like protein 1 (2694 aa).

Disordered regions lie at residues 1289–1314 (VLMK…TDEE), 1330–1350 (SLED…DSSV), and 1381–1411 (CEMS…SVHS). The span at 1290–1314 (LMKDNDKNMSTEDTKKNSDEKTDEE) shows a compositional bias: basic and acidic residues. Polar residues predominate over residues 1383-1409 (MSDSGSQVPDSLPSTPSPVESTKSFSV). One can recognise a BEACH-type PH domain in the interval 1883-1980 (DQKEKLVLME…VRNKIYSRLL (98 aa)). Positions 1992–2284 (RSPQELFKAS…QLLKEPHPPR (293 aa)) constitute a BEACH domain. WD repeat units lie at residues 2439-2478 (RHMD…GVPV) and 2490-2531 (GHTN…RTLR).

It belongs to the WD repeat neurobeachin family. As to expression, highly expressed in brain, kidney, prostate and testis. Weakly expressed in ovary, small intestine, colon and peripheral blood leukocytes. May be correlative to several tumors, such as ovary serous adenocarcinoma and metastasis mammary gland carcinoma breast.

The sequence is that of Neurobeachin-like protein 1 (NBEAL1) from Homo sapiens (Human).